A 160-amino-acid chain; its full sequence is Endoribonuclease YbeY (160 aa).

Zn(2+)-binding residues include histidine 112, histidine 116, and histidine 122. Residues glutamate 141–lysine 160 are disordered.

This sequence belongs to the endoribonuclease YbeY family. The cofactor is Zn(2+).

The protein resides in the cytoplasm. Functionally, single strand-specific metallo-endoribonuclease involved in late-stage 70S ribosome quality control and in maturation of the 3' terminus of the 16S rRNA. In Pseudomonas paraeruginosa (strain DSM 24068 / PA7) (Pseudomonas aeruginosa (strain PA7)), this protein is Endoribonuclease YbeY.